The sequence spans 312 residues: Pyridoxal kinase (312 aa).

M1 is subject to N-acetylmethionine. 2 residues coordinate pyridoxal: S12 and T47. Residue T47 participates in pyridoxal 5'-phosphate binding. Position 59 is a phosphoserine (S59). D113 provides a ligand contact to ATP. D113 is a binding site for Na(+). Residue D118 coordinates Mg(2+). Position 148 (T148) interacts with Na(+). 150 to 153 (NQFE) is a binding site for ATP. At S164 the chain carries Phosphoserine. Residue T186 participates in Na(+) binding. 186-187 (TS) lines the ATP pocket. S213 carries the phosphoserine modification. ATP contacts are provided by residues 226–228 (VDP) and T233. 234-235 (GD) provides a ligand contact to pyridoxal 5'-phosphate. The active-site Proton acceptor is D235. S285 is subject to Phosphoserine.

The protein belongs to the pyridoxine kinase family. In terms of assembly, homodimer. Requires Zn(2+) as cofactor. It depends on Mg(2+) as a cofactor.

The protein resides in the cytoplasm. It is found in the cytosol. It carries out the reaction pyridoxal + ATP = pyridoxal 5'-phosphate + ADP + H(+). It catalyses the reaction pyridoxamine + ATP = pyridoxamine 5'-phosphate + ADP + H(+). The catalysed reaction is pyridoxine + ATP = pyridoxine 5'-phosphate + ADP + H(+). It functions in the pathway cofactor metabolism; pyridoxal 5'-phosphate salvage; pyridoxal 5'-phosphate from pyridoxal: step 1/1. It participates in cofactor metabolism; pyridoxal 5'-phosphate salvage; pyridoxine 5'-phosphate from pyridoxine: step 1/1. Its pathway is cofactor metabolism; pyridoxal 5'-phosphate salvage; pyridoxamine 5'-phosphate from pyridoxamine: step 1/1. With respect to regulation, activity is increased in the presence of K(+)or Na(+). In terms of biological role, catalyzes the phosphorylation of the dietary vitamin B6 vitamers pyridoxal (PL), pyridoxine (PN) and pyridoxamine (PM) to form pyridoxal 5'-phosphate (PLP), pyridoxine 5'-phosphate (PNP) and pyridoxamine 5'-phosphate (PMP), respectively. PLP is the active form of vitamin B6, and acts as a cofactor for over 140 different enzymatic reactions. This is Pyridoxal kinase (Pdxk) from Rattus norvegicus (Rat).